Here is a 162-residue protein sequence, read N- to C-terminus: NAD(P)H-quinone oxidoreductase subunit N (162 aa).

This sequence belongs to the complex I NdhN subunit family. NDH-1 can be composed of about 15 different subunits; different subcomplexes with different compositions have been identified which probably have different functions.

It is found in the cellular thylakoid membrane. The catalysed reaction is a plastoquinone + NADH + (n+1) H(+)(in) = a plastoquinol + NAD(+) + n H(+)(out). The enzyme catalyses a plastoquinone + NADPH + (n+1) H(+)(in) = a plastoquinol + NADP(+) + n H(+)(out). In terms of biological role, NDH-1 shuttles electrons from an unknown electron donor, via FMN and iron-sulfur (Fe-S) centers, to quinones in the respiratory and/or the photosynthetic chain. The immediate electron acceptor for the enzyme in this species is believed to be plastoquinone. Couples the redox reaction to proton translocation, and thus conserves the redox energy in a proton gradient. Cyanobacterial NDH-1 also plays a role in inorganic carbon-concentration. In Nostoc sp. (strain PCC 7120 / SAG 25.82 / UTEX 2576), this protein is NAD(P)H-quinone oxidoreductase subunit N.